Reading from the N-terminus, the 22-residue chain is Bacteriocin serracin-P 23 kDa subunit (22 aa).

In terms of biological role, major component of a prophage tail tube. Antibacterial activity against Gram-negative bacterium E.amylovora. This Serratia plymuthica protein is Bacteriocin serracin-P 23 kDa subunit.